The following is a 164-amino-acid chain: Respiratory growth induced protein 2 (164 aa).

This sequence belongs to the RGI1 family.

It is found in the cytoplasm. Functionally, involved in the control of energetic metabolism and significantly contribute to cell fitness, especially under respiratory growth conditions. The polypeptide is Respiratory growth induced protein 2 (RGI2) (Candida glabrata (strain ATCC 2001 / BCRC 20586 / JCM 3761 / NBRC 0622 / NRRL Y-65 / CBS 138) (Yeast)).